Consider the following 534-residue polypeptide: Protein TIC 62, chloroplastic (534 aa).

The transit peptide at 1–64 (MPMEVFSLTS…SSSSSSSSIR (64 aa)) directs the protein to the chloroplast. Residues 50–83 (NNRIRSSSSSSSSIRAQASGSTKSSTAEGIPEKT) are disordered. The span at 63–76 (IRAQASGSTKSSTA) shows a compositional bias: polar residues. 91-120 (VFVAGATGKVGSRTVRELIKLGFKVRAGVR) contacts NADP(+). A disordered region spans residues 334-534 (PSQRPYIPSP…ASPSPSFRKS (201 aa)). A compositionally biased stretch (polar residues) spans 350–360 (DTATVSNTGPS). Repeat 1 spans residues 387-408 (PLSPYTAYDDLKPPSSPSPTKP). Residues 387–532 (PLSPYTAYDD…PPASPSPSFR (146 aa)) are 3 X 22 AA approximate repeats. A compositionally biased stretch (low complexity) spans 421-432 (PTPISSDTPSSI). Repeat unit 2 spans residues 450 to 471 (SLSPYAAYPDLKPPSSPSPSVP). The span at 460 to 469 (LKPPSSPSPS) shows a compositional bias: pro residues. Residues 495-509 (DTPKNEEQHLHEPKS) show a composition bias toward basic and acidic residues. The stretch at 511 to 532 (PLSPYAMYEDLKPPASPSPSFR) is repeat 3.

As to quaternary structure, part of the Tic complex. Interacts with TIC40, TIC110 and TIC55. Interacts (via C-terminus) with PETH/FNR.

Its subcellular location is the plastid. It is found in the chloroplast inner membrane. It localises to the chloroplast stroma. In terms of biological role, involved in protein precursor import into chloroplasts. Part of the redox regulon consisting of TIC32, TIC 55 and TIC62. Has a NADPH-dependent dehydrogenase activity, but only after preincubation with lipids. This chain is Protein TIC 62, chloroplastic (TIC62), found in Pisum sativum (Garden pea).